We begin with the raw amino-acid sequence, 245 residues long: Tyrosine recombinase XerD-like (245 aa).

In terms of domain architecture, Core-binding (CB) spans 1 to 72 (MITFISKFLA…AVNQFLFFLY (72 aa)). Positions 90-245 (PLLTPAYQEV…PVTLEKYFKN (156 aa)) constitute a Tyr recombinase domain. Catalysis depends on residues Lys151 and Arg210. The active-site O-(3'-phospho-DNA)-tyrosine intermediate is Tyr242.

Belongs to the 'phage' integrase family. XerD-like subfamily.

The protein resides in the cytoplasm. Functionally, putative tyrosine recombinase. Not involved in the cutting and rejoining of the recombining DNA molecules on dif(SL) site. This is Tyrosine recombinase XerD-like from Streptococcus mutans serotype c (strain ATCC 700610 / UA159).